The chain runs to 342 residues: tRNA N6-adenosine threonylcarbamoyltransferase (342 aa).

Positions 114 and 118 each coordinate Fe cation. Substrate contacts are provided by residues 136 to 140, Asp-169, Gly-182, Asp-186, and Asn-275; that span reads LVSGG. Asp-301 serves as a coordination point for Fe cation.

This sequence belongs to the KAE1 / TsaD family. Fe(2+) is required as a cofactor.

It is found in the cytoplasm. The catalysed reaction is L-threonylcarbamoyladenylate + adenosine(37) in tRNA = N(6)-L-threonylcarbamoyladenosine(37) in tRNA + AMP + H(+). Required for the formation of a threonylcarbamoyl group on adenosine at position 37 (t(6)A37) in tRNAs that read codons beginning with adenine. Is involved in the transfer of the threonylcarbamoyl moiety of threonylcarbamoyl-AMP (TC-AMP) to the N6 group of A37, together with TsaE and TsaB. TsaD likely plays a direct catalytic role in this reaction. The protein is tRNA N6-adenosine threonylcarbamoyltransferase of Streptococcus pyogenes serotype M3 (strain ATCC BAA-595 / MGAS315).